A 390-amino-acid polypeptide reads, in one-letter code: Chorismate synthase 1 (390 aa).

Positions 39 and 45 each coordinate NADP(+). Positions 95–117 (EQEEKEMKRKVTKPRPGHADLNG) are disordered. Residues 132–134 (RSS), 253–254 (NA), Gly-298, 313–317 (KPIPT), and Arg-339 each bind FMN.

This sequence belongs to the chorismate synthase family. In terms of assembly, homotetramer. It depends on FMNH2 as a cofactor.

The enzyme catalyses 5-O-(1-carboxyvinyl)-3-phosphoshikimate = chorismate + phosphate. It participates in metabolic intermediate biosynthesis; chorismate biosynthesis; chorismate from D-erythrose 4-phosphate and phosphoenolpyruvate: step 7/7. In terms of biological role, catalyzes the anti-1,4-elimination of the C-3 phosphate and the C-6 proR hydrogen from 5-enolpyruvylshikimate-3-phosphate (EPSP) to yield chorismate, which is the branch point compound that serves as the starting substrate for the three terminal pathways of aromatic amino acid biosynthesis. This reaction introduces a second double bond into the aromatic ring system. The protein is Chorismate synthase 1 of Bacillus cereus (strain ATCC 14579 / DSM 31 / CCUG 7414 / JCM 2152 / NBRC 15305 / NCIMB 9373 / NCTC 2599 / NRRL B-3711).